Consider the following 145-residue polypeptide: Small ribosomal subunit protein eS19 (145 aa).

A disordered region spans residues 120 to 145 (GGRRISENGQRDLDRIAAQTLEEDDE). A compositionally biased stretch (basic and acidic residues) spans 123–134 (RISENGQRDLDR).

This sequence belongs to the eukaryotic ribosomal protein eS19 family. In terms of assembly, component of the small ribosomal subunit. Mature ribosomes consist of a small (40S) and a large (60S) subunit. The 40S subunit contains about 32 different proteins and 1 molecule of RNA (18S). The 60S subunit contains 45 different proteins and 3 molecules of RNA (25S, 5.8S and 5S).

The protein localises to the cytoplasm. Its function is as follows. Component of the ribosome, a large ribonucleoprotein complex responsible for the synthesis of proteins in the cell. The small ribosomal subunit (SSU) binds messenger RNAs (mRNAs) and translates the encoded message by selecting cognate aminoacyl-transfer RNA (tRNA) molecules. The large subunit (LSU) contains the ribosomal catalytic site termed the peptidyl transferase center (PTC), which catalyzes the formation of peptide bonds, thereby polymerizing the amino acids delivered by tRNAs into a polypeptide chain. The nascent polypeptides leave the ribosome through a tunnel in the LSU and interact with protein factors that function in enzymatic processing, targeting, and the membrane insertion of nascent chains at the exit of the ribosomal tunnel. RPS19A is required for proper maturation of the small (40S) ribosomal subunit. This is Small ribosomal subunit protein eS19 (RPS19A) from Candida albicans (strain SC5314 / ATCC MYA-2876) (Yeast).